A 358-amino-acid chain; its full sequence is Peptide chain release factor 1 (358 aa).

The residue at position 235 (glutamine 235) is an N5-methylglutamine.

It belongs to the prokaryotic/mitochondrial release factor family. In terms of processing, methylated by PrmC. Methylation increases the termination efficiency of RF1.

The protein resides in the cytoplasm. In terms of biological role, peptide chain release factor 1 directs the termination of translation in response to the peptide chain termination codons UAG and UAA. The chain is Peptide chain release factor 1 from Nitrosospira multiformis (strain ATCC 25196 / NCIMB 11849 / C 71).